The chain runs to 289 residues: Survival motor neuron protein (289 aa).

Residues 1–10 (MAMGSGGGAG) are compositionally biased toward gly residues. The interval 1–27 (MAMGSGGGAGSEQEDTVLFRRGTGQSD) is disordered. The tract at residues 11–42 (SEQEDTVLFRRGTGQSDDSDIWDDTALIKAYD) is P1 (binding site for GEMIN2). T23 carries the phosphothreonine modification. Phosphoserine occurs at positions 26 and 29. Residue K49 forms a Glycyl lysine isopeptide (Lys-Gly) (interchain with G-Cter in SUMO2) linkage. The disordered stretch occupies residues 55 to 88 (GDMCETSDKPKGTARRKPAKKNKNQKKNATAPLK). Residues 66-80 (GTARRKPAKKNKNQK) are compositionally biased toward basic residues. T67 carries the phosphothreonine modification. The Tudor domain maps to 89-149 (QWKAGDKCSA…LSPTCEVANN (61 aa)). The tract at residues 95 to 205 (KCSAVWSEDG…VPGAGLGPGK (111 aa)) is required for interaction with RPP20/POP7. Residues 150 to 226 (TEQNTQENES…PPPPPPFLPC (77 aa)) form a disordered region. Residues 171 to 181 (RSLRSKAHSKS) are compositionally biased toward basic residues. Residue K205 forms a Glycyl lysine isopeptide (Lys-Gly) (interchain with G-Cter in SUMO2) linkage. Residues 212–226 (GPPPPPPPPPPFLPC) are compositionally biased toward pro residues. The tract at residues 235-262 (PPIIPPPPPISPDCLDDTDALGSMLISW) is P2 (binding site for SM B). Positions 274 to 289 (GFRQNKKEGKKCSHTN) are required for interaction with SYNCRIP.

It belongs to the SMN family. As to quaternary structure, homooligomer; may form higher order homooligomers in the dimer to octamer range. Part of the core SMN complex that contains SMN1, GEMIN2/SIP1, DDX20/GEMIN3, GEMIN4, GEMIN5, GEMIN6, GEMIN7, GEMIN8 and STRAP/UNRIP. Part of the SMN-Sm complex that contains SMN1, GEMIN2/SIP1, DDX20/GEMIN3, GEMIN4, GEMIN5, GEMIN6, GEMIN7, GEMIN8, STRAP/UNRIP and the Sm proteins SNRPB, SNRPD1, SNRPD2, SNRPD3, SNRPE, SNRPF and SNRPG. Component of an import snRNP complex composed of KPNB1, RNUT1, SMN1 and ZNF259. Interacts with DDX20, FBL, NOLA1, RNUT1 and with several spliceosomal snRNP core Sm proteins, including SNRPB, SNRPD1, SNRPD2, SNRPD3, SNRPE and ILF3. Interacts with GEMIN2; the interaction is direct. Interacts with GEMIN3; the interaction is direct. Interacts with GEMIN8; the interaction is direct. Interacts with SNRPB; the interaction is direct. Interacts (via Tudor domain) with SNRPD1 (via C-terminus); the interaction is direct. Interacts with SNRPD2; the interaction is direct. Interacts (via Tudor domain) with SNRPD3 (via C-terminus); the interaction is direct. Interacts with SNRPE; the interaction is direct. Interacts with OSTF1, LSM10, LSM11 and RPP20/POP7. Interacts (via C-terminal region) with ZPR1 (via C-terminal region). Interacts (via Tudor domain) with COIL. Interacts with SETX; recruits SETX to POLR2A. Interacts with POLR2A (via the C-terminal domain (CTD)). Interacts with PRMT5. Interacts with XRN2. Interacts (via C-terminus) with FMR1 (via C-terminus); the interaction is direct and occurs in a RNA-independent manner. Interacts with SYNCRIP. Interacts (via Tudor domain) with SF3B2 (methylated form). Interacts with WRAP53/TCAB1. Interacts (via Tudor domain) with ELAVL4 in an RNA-independent manner; the interaction is required for localization of ELAVL4 to RNA granules. Interacts with FRG1.

The protein localises to the nucleus. The protein resides in the gem. Its subcellular location is the cajal body. It localises to the cytoplasm. It is found in the cytoplasmic granule. The protein localises to the perikaryon. The protein resides in the cell projection. Its subcellular location is the neuron projection. It localises to the axon. It is found in the myofibril. The protein localises to the sarcomere. The protein resides in the z line. The SMN complex catalyzes the assembly of small nuclear ribonucleoproteins (snRNPs), the building blocks of the spliceosome, and thereby plays an important role in the splicing of cellular pre-mRNAs. Most spliceosomal snRNPs contain a common set of Sm proteins SNRPB, SNRPD1, SNRPD2, SNRPD3, SNRPE, SNRPF and SNRPG that assemble in a heptameric protein ring on the Sm site of the small nuclear RNA to form the core snRNP (Sm core). In the cytosol, the Sm proteins SNRPD1, SNRPD2, SNRPE, SNRPF and SNRPG are trapped in an inactive 6S pICln-Sm complex by the chaperone CLNS1A that controls the assembly of the core snRNP. To assemble core snRNPs, the SMN complex accepts the trapped 5Sm proteins from CLNS1A forming an intermediate. Binding of snRNA inside 5Sm ultimately triggers eviction of the SMN complex, thereby allowing binding of SNRPD3 and SNRPB to complete assembly of the core snRNP. Within the SMN complex, SMN1 acts as a structural backbone and together with GEMIN2 it gathers the Sm complex subunits. Ensures the correct splicing of U12 intron-containing genes that may be important for normal motor and proprioceptive neurons development. Also required for resolving RNA-DNA hybrids created by RNA polymerase II, that form R-loop in transcription terminal regions, an important step in proper transcription termination. May also play a role in the metabolism of small nucleolar ribonucleoprotein (snoRNPs). This is Survival motor neuron protein (Smn1) from Rattus norvegicus (Rat).